The chain runs to 121 residues: uncharacterized protein (121 aa).

The protein to E.coli YcjD and H.influenzae HI_1162.

This is an uncharacterized protein from Haemophilus influenzae (strain ATCC 51907 / DSM 11121 / KW20 / Rd).